The primary structure comprises 244 residues: MTDLPEKEGGRFHASVLTLYPEMFPGPLGISLAGKALAEGKWQLDTVQIRDFAEGRHRMVDDTPSGGGAGMVMKADVVARALDSVDDGRPMLLMTPRGKPLTQERVRALADGAGAIILCGRFEGVDERVIEGRNLEEISIGDYILSGGETAAIVLLDAVVRLLPGVMGNRESGETESFETGLLEHPHYTRPQEWEGRAIPDILTSGNHGAIDKWRLEQAERITRERRPDLWEAYCKNRRKIGGQ.

S-adenosyl-L-methionine contacts are provided by residues Gly120 and Ile140–Leu145.

Belongs to the RNA methyltransferase TrmD family. In terms of assembly, homodimer.

It localises to the cytoplasm. It carries out the reaction guanosine(37) in tRNA + S-adenosyl-L-methionine = N(1)-methylguanosine(37) in tRNA + S-adenosyl-L-homocysteine + H(+). Specifically methylates guanosine-37 in various tRNAs. This Brucella abortus (strain S19) protein is tRNA (guanine-N(1)-)-methyltransferase.